The following is a 349-amino-acid chain: MSQSGEKVKFSDSAGYVGFANLPNQVHRKSVKKGFEFTLMVVGESGLGKSTLINSLFLTDLYPERYIPGAAEKIERTVQIEASTVEIEERGVKLRLTVVDTPGYGDAINSQDCFKTIIQYIDNQFERYLHDESGLNRRHIIDNRVHCCFYFISPFGHGLKPLDVEFMKALHGKVNIVPVIAKADTLTLKERERLKRRVLDEISEHGIRIYQLPDADSDEDEEFKEQTRVLKASIPFAVIGSNQLIEVKGKKIRGRLYPWGVVEVENPEHNDFLKLRTMLVTHMQDLQEVTQDLHYENFRSERLKRTGKPVEEEVVDKDRILQQKEAELRRMQEMIAQMQAQMRMKPGDD.

The 273-residue stretch at 33–305 (KGFEFTLMVV…ENFRSERLKR (273 aa)) folds into the Septin-type G domain. A G1 motif region spans residues 43–50 (GESGLGKS). GTP is bound by residues 43-50 (GESGLGKS), threonine 77, glycine 103, 182-190 (KADTLTLKE), glycine 240, and arginine 255. Residues 100–103 (DTPG) are G3 motif. The tract at residues 181 to 184 (AKAD) is G4 motif. Positions 259-269 (WGVVEVENPEH) are important for dimerization.

It belongs to the TRAFAC class TrmE-Era-EngA-EngB-Septin-like GTPase superfamily. Septin GTPase family. Septins polymerize into heterooligomeric protein complexes that form filaments, and associate with cellular membranes, actin filaments and microtubules. GTPase activity is required for filament formation. Can form heterooligomers with other family members and form filaments.

It is found in the cytoplasm. The protein localises to the cytoskeleton. The protein resides in the spindle. Its subcellular location is the cleavage furrow. It localises to the midbody. It is found in the cell cortex. The protein localises to the cell projection. The protein resides in the cilium membrane. Its function is as follows. Filament-forming cytoskeletal GTPase. Required for normal organization of the actin cytoskeleton. Plays a role in the biogenesis of polarized columnar-shaped epithelium by maintaining polyglutamylated microtubules, thus facilitating efficient vesicle transport, and by impeding MAP4 binding to tubulin. Required for the progression through mitosis. Forms a scaffold at the midplane of the mitotic splindle required to maintain CENPE localization at kinetochores and consequently chromosome congression. During anaphase, may be required for chromosome segregation and spindle elongation. Plays a role in ciliogenesis and collective cell movements. In cilia, required for the integrity of the diffusion barrier at the base of the primary cilium that prevents diffusion of transmembrane proteins between the cilia and plasma membranes. The chain is Septin-2 from Gallus gallus (Chicken).